The chain runs to 437 residues: Adenosylmethionine-8-amino-7-oxononanoate aminotransferase (437 aa).

W64 is a binding site for substrate. 124–125 provides a ligand contact to pyridoxal 5'-phosphate; that stretch reads GS. Residue Y157 participates in substrate binding. Residue D254 coordinates pyridoxal 5'-phosphate. The substrate site is built by K283 and G316. K283 carries the post-translational modification N6-(pyridoxal phosphate)lysine. 317–318 is a pyridoxal 5'-phosphate binding site; that stretch reads PT. Substrate is bound at residue R400.

This sequence belongs to the class-III pyridoxal-phosphate-dependent aminotransferase family. BioA subfamily. As to quaternary structure, homodimer. Pyridoxal 5'-phosphate is required as a cofactor.

It is found in the cytoplasm. The catalysed reaction is (8S)-8-amino-7-oxononanoate + S-adenosyl-L-methionine = S-adenosyl-4-methylsulfanyl-2-oxobutanoate + (7R,8S)-7,8-diammoniononanoate. Its pathway is cofactor biosynthesis; biotin biosynthesis; 7,8-diaminononanoate from 8-amino-7-oxononanoate (SAM route): step 1/1. Functionally, catalyzes the transfer of the alpha-amino group from S-adenosyl-L-methionine (SAM) to 7-keto-8-aminopelargonic acid (KAPA) to form 7,8-diaminopelargonic acid (DAPA). It is the only aminotransferase known to utilize SAM as an amino donor. This is Adenosylmethionine-8-amino-7-oxononanoate aminotransferase (bioA) from Mycobacterium tuberculosis (strain CDC 1551 / Oshkosh).